We begin with the raw amino-acid sequence, 343 residues long: 4-hydroxy-2-oxovalerate aldolase (343 aa).

One can recognise a Pyruvate carboxyltransferase domain in the interval 4-254 (PRLTDTTLRD…NPGLDVFSLM (251 aa)). 12–13 (RD) serves as a coordination point for substrate. D13 serves as a coordination point for Mn(2+). H16 acts as the Proton acceptor in catalysis. Substrate contacts are provided by S166 and H193. Mn(2+)-binding residues include H193 and H195. A substrate-binding site is contributed by Y284.

Belongs to the 4-hydroxy-2-oxovalerate aldolase family.

It catalyses the reaction (S)-4-hydroxy-2-oxopentanoate = acetaldehyde + pyruvate. The sequence is that of 4-hydroxy-2-oxovalerate aldolase from Chloroflexus aurantiacus (strain ATCC 29364 / DSM 637 / Y-400-fl).